A 680-amino-acid polypeptide reads, in one-letter code: Zinc finger protein 263 (680 aa).

Residue K19 forms a Glycyl lysine isopeptide (Lys-Gly) (interchain with G-Cter in SUMO2) linkage. One can recognise an SCAN box domain in the interval 43–125; sequence HLRFRRFRFQ…TLVERMQKEL (83 aa). A disordered region spans residues 147–191; it reads LPLETAGESPSFKLEPMETERSPGPRLQELLDPSPQRDSQAVKER. K159 is covalently cross-linked (Glycyl lysine isopeptide (Lys-Gly) (interchain with G-Cter in SUMO2)). A phosphoserine mark is found at S168 and S180. Residues K286, K300, and K376 each participate in a glycyl lysine isopeptide (Lys-Gly) (interchain with G-Cter in SUMO2) cross-link. C2H2-type zinc fingers lie at residues 378–400, 434–456, 462–484, 490–512, and 518–540; these read HLCA…QRIH, HKCL…QRTH, FQCN…QRTH, YKCP…QRIH, and YRCS…ERTH. Residues K570 and K579 each participate in a glycyl lysine isopeptide (Lys-Gly) (interchain with G-Cter in SUMO2) cross-link. C2H2-type zinc fingers lie at residues 572-594, 600-622, 628-650, and 656-678; these read FECS…QRTH, YKCI…QRIH, YTCH…LRTH, and YKCS…QRTH.

This sequence belongs to the krueppel C2H2-type zinc-finger protein family. As to quaternary structure, interacts with a number of proteins involved in chromatin modification and transcriptional corepression including DNMT1, DNMT3A, HDAC2, PHF8, TRIM28/KAP1, SETDB1, EZH2, UHRF1, CBX3/HP1-gamma, and CBX5/HP1-alpha; recruits these proteins to the SIX3 promoter region, leading to SIX3 transcriptional repression. Interacts with MAPK3/ERK1 and MAPK1/ERK2. In terms of processing, ubiquitinated, leading to proteasomal degradation. Expressed in Purkinje cells in the brain (at protein level).

It localises to the nucleus. Its function is as follows. Transcription factor that binds to the consensus sequence 5'-TCCTCCC-3' and acts as a transcriptional repressor. Binds to the promoter region of SIX3 and recruits other proteins involved in chromatin modification and transcriptional corepression, resulting in methylation of the promoter and transcriptional repression. Acts as a transcriptional repressor of HS3ST1 and HS3ST3A1 via binding to gene promoter regions. The chain is Zinc finger protein 263 from Mus musculus (Mouse).